The following is a 148-amino-acid chain: FAD synthase (148 aa).

Residues 14-15, 19-22, and aspartate 100 each bind ATP; these read VF and HVGH.

It belongs to the archaeal FAD synthase family. Homodimer. A divalent metal cation is required as a cofactor.

It carries out the reaction FMN + ATP + H(+) = FAD + diphosphate. The protein operates within cofactor biosynthesis; FAD biosynthesis; FAD from FMN: step 1/1. In terms of biological role, catalyzes the transfer of the AMP portion of ATP to flavin mononucleotide (FMN) to produce flavin adenine dinucleotide (FAD) coenzyme. This is FAD synthase from Pyrococcus abyssi (strain GE5 / Orsay).